Consider the following 272-residue polypeptide: MVKEISVGNIKIGGDRPLVLVAGPCVIENEAATLRCAERLMTICNGVSMPLIFKASYDKANRTSVNSFRGPGLKDGLKILKKVKESLGVPVLSDIHSIEQVEPAAEVLDVIQIPAFLCRQTDLVVAAAMSGRVINIKKGQFLAPWDMENVVGKAVSTGNDNVILTERGVSFGYNNLVSDMRSFPILRQTGYPVIFDATHSVQLPGGLGGSSGGQREFVEYLGRAAVATGIDGIFMEVHEDPEKALCDGPNSVKLDDLPALLKKLKAIDAIVK.

It belongs to the KdsA family.

It localises to the cytoplasm. It carries out the reaction D-arabinose 5-phosphate + phosphoenolpyruvate + H2O = 3-deoxy-alpha-D-manno-2-octulosonate-8-phosphate + phosphate. The protein operates within carbohydrate biosynthesis; 3-deoxy-D-manno-octulosonate biosynthesis; 3-deoxy-D-manno-octulosonate from D-ribulose 5-phosphate: step 2/3. Its pathway is bacterial outer membrane biogenesis; lipopolysaccharide biosynthesis. The sequence is that of 2-dehydro-3-deoxyphosphooctonate aldolase from Geotalea daltonii (strain DSM 22248 / JCM 15807 / FRC-32) (Geobacter daltonii).